Here is a 244-residue protein sequence, read N- to C-terminus: Eukaryotic translation initiation factor 6 (244 aa).

Belongs to the eIF-6 family. In terms of assembly, monomer. Associates with the 60S ribosomal subunit.

It localises to the cytoplasm. It is found in the nucleus. Its subcellular location is the nucleolus. Binds to the 60S ribosomal subunit and prevents its association with the 40S ribosomal subunit to form the 80S initiation complex in the cytoplasm. May also be involved in ribosome biogenesis. This chain is Eukaryotic translation initiation factor 6 (eif6), found in Dictyostelium discoideum (Social amoeba).